A 91-amino-acid polypeptide reads, in one-letter code: Large ribosomal subunit protein eL43 (91 aa).

The C4-type zinc-finger motif lies at 39–60 (CSFCGKEAMKRKATGIWNCAKC).

This sequence belongs to the eukaryotic ribosomal protein eL43 family.

In Caenorhabditis elegans, this protein is Large ribosomal subunit protein eL43.